Reading from the N-terminus, the 215-residue chain is Probable GTP-binding protein EngB (215 aa).

The EngB-type G domain maps to E26–P200. GTP contacts are provided by residues G34–S41, G61–L65, D79–G82, T146–D149, and F179–S181. Mg(2+) contacts are provided by S41 and T63.

The protein belongs to the TRAFAC class TrmE-Era-EngA-EngB-Septin-like GTPase superfamily. EngB GTPase family. The cofactor is Mg(2+).

Its function is as follows. Necessary for normal cell division and for the maintenance of normal septation. The sequence is that of Probable GTP-binding protein EngB from Aliivibrio fischeri (strain ATCC 700601 / ES114) (Vibrio fischeri).